A 131-amino-acid chain; its full sequence is Meiotically up-regulated gene 115 protein (131 aa).

The protein localises to the mitochondrion. The protein resides in the nucleus. In terms of biological role, has a role in meiosis. This chain is Meiotically up-regulated gene 115 protein (mug115), found in Schizosaccharomyces pombe (strain 972 / ATCC 24843) (Fission yeast).